A 228-amino-acid polypeptide reads, in one-letter code: MIDAFFIAGTDTDVGKTVASKAVLQALAAKGLNTIGYKPVAAGSEKTEQGWRNSDALHLQKAATLEVAYEDVNPYALELPASPHIAAKHEQVEIEYDLLSEKLAQHKEQADVVLVEGAGGWRVPVSDTDSLSTWVQQEQLPVVLVVGIKLGCLSHALLTAEIIKADGLNLVGWIANRVNPGTEHYADIIEMLESRIDAPKLGEIPYIPSAKRKELGKYINVEPLLNID.

13 to 18 (DVGKTV) contacts ATP. Position 17 (Thr-17) interacts with Mg(2+). The active site involves Lys-38. ATP contacts are provided by residues Asp-55, 116 to 119 (EGAG), 176 to 177 (NR), and 205 to 207 (PYI). Positions 55 and 116 each coordinate Mg(2+).

Belongs to the dethiobiotin synthetase family. As to quaternary structure, homodimer. Mg(2+) serves as cofactor.

It is found in the cytoplasm. The enzyme catalyses (7R,8S)-7,8-diammoniononanoate + CO2 + ATP = (4R,5S)-dethiobiotin + ADP + phosphate + 3 H(+). It functions in the pathway cofactor biosynthesis; biotin biosynthesis; biotin from 7,8-diaminononanoate: step 1/2. In terms of biological role, catalyzes a mechanistically unusual reaction, the ATP-dependent insertion of CO2 between the N7 and N8 nitrogen atoms of 7,8-diaminopelargonic acid (DAPA, also called 7,8-diammoniononanoate) to form a ureido ring. The chain is ATP-dependent dethiobiotin synthetase BioD from Vibrio parahaemolyticus serotype O3:K6 (strain RIMD 2210633).